Here is a 206-residue protein sequence, read N- to C-terminus: Small ribosomal subunit protein uS4 (206 aa).

One can recognise an S4 RNA-binding domain in the interval threonine 96–lysine 156.

Belongs to the universal ribosomal protein uS4 family. Part of the 30S ribosomal subunit. Contacts protein S5. The interaction surface between S4 and S5 is involved in control of translational fidelity.

One of the primary rRNA binding proteins, it binds directly to 16S rRNA where it nucleates assembly of the body of the 30S subunit. Its function is as follows. With S5 and S12 plays an important role in translational accuracy. The sequence is that of Small ribosomal subunit protein uS4 from Shewanella putrefaciens (strain CN-32 / ATCC BAA-453).